Here is a 138-residue protein sequence, read N- to C-terminus: Protein FAM136A (138 aa).

Alanine 2 is subject to N-acetylalanine. Threonine 124 and threonine 126 each carry phosphothreonine.

Belongs to the FAM136 family.

The chain is Protein FAM136A (Fam136a) from Rattus norvegicus (Rat).